Reading from the N-terminus, the 870-residue chain is Leucine--tRNA ligase (870 aa).

The 'HIGH' region motif lies at 42–52 (PYPSGKLHMGH). The short motif at 629-633 (KMSKS) is the 'KMSKS' region element. Lys-632 contributes to the ATP binding site.

Belongs to the class-I aminoacyl-tRNA synthetase family.

The protein localises to the cytoplasm. It carries out the reaction tRNA(Leu) + L-leucine + ATP = L-leucyl-tRNA(Leu) + AMP + diphosphate. This is Leucine--tRNA ligase from Ectopseudomonas mendocina (strain ymp) (Pseudomonas mendocina).